A 362-amino-acid polypeptide reads, in one-letter code: Atypical chemokine receptor 3 (362 aa).

The Extracellular portion of the chain corresponds to 1-40 (MDLHLFDYAEPGNFSDISWPCNSSDCIVVDTVLCPNMPNK). 3 N-linked (GlcNAc...) asparagine glycosylation sites follow: Asn-13, Asn-22, and Asn-39. Residues 41–61 (SVLLYTLSFIYIFIFVIGMIA) form a helical membrane-spanning segment. The Cytoplasmic portion of the chain corresponds to 62–81 (NSVVVWVNIQAKTTGYDTHC). Residues 82–102 (YILNLAIADLWVVVTIPVWVV) traverse the membrane as a helical segment. Topologically, residues 103 to 118 (SLVQHNQWPMGELTCK) are extracellular. A disulfide bond links Cys-117 and Cys-196. The chain crosses the membrane as a helical span at residues 119 to 139 (ITHLIFSINLFGSIFFLTCMS). The Cytoplasmic portion of the chain corresponds to 140–162 (VDRYLSITYFASTSSRRKKVVRR). A helical transmembrane segment spans residues 163–183 (AVCVLVWLLAFCVSLPDTYYL). Over 184-213 (KTVTSASNNETYCRSFYPEHSVKEWLISME) the chain is Extracellular. Residues 214–234 (LVSVVLGFAIPFCVIAVFYCL) form a helical membrane-spanning segment. Over 235–252 (LARAISASSDQEKQSSRK) the chain is Cytoplasmic. Residues 253–273 (IIFSYVVVFLVCWLPYHVVVL) traverse the membrane as a helical segment. Residues 274 to 296 (LDIFSILHYIPFTCQLENFLFTA) are Extracellular-facing. The chain crosses the membrane as a helical span at residues 297–319 (LHVTQCLSLVHCCVNPVLYSFIN). The Cytoplasmic segment spans residues 320–362 (RNYRYELMKAFIFKYSAKTGLTKLIDASRVSETEYSALEQNAK). Positions 324 to 362 (YELMKAFIFKYSAKTGLTKLIDASRVSETEYSALEQNAK) are C-terminal cytoplasmic tail. Phosphoserine occurs at positions 347, 350, and 355.

It belongs to the G-protein coupled receptor 1 family. Atypical chemokine receptor subfamily. In terms of assembly, homodimer. Can form heterodimers with CXCR4; heterodimerization may regulate CXCR4 signaling activity. Interacts with ARRB1 and ARRB2. Post-translationally, the Ser/Thr residues in the C-terminal cytoplasmic tail may be phosphorylated. In terms of processing, ubiquitinated at the Lys residues in its C-terminal cytoplasmic tail and is essential for correct trafficking from and to the cell membrane. Deubiquitinated by CXCL12-stimulation in a reversible manner.

It localises to the cell membrane. It is found in the early endosome. The protein resides in the recycling endosome. In terms of biological role, atypical chemokine receptor that controls chemokine levels and localization via high-affinity chemokine binding that is uncoupled from classic ligand-driven signal transduction cascades, resulting instead in chemokine sequestration, degradation, or transcytosis. Also known as interceptor (internalizing receptor) or chemokine-scavenging receptor or chemokine decoy receptor. Acts as a receptor for chemokines CXCL11 and CXCL12/SDF1. Chemokine binding does not activate G-protein-mediated signal transduction but instead induces beta-arrestin recruitment, leading to ligand internalization and activation of MAPK signaling pathway. Required for regulation of CXCR4 protein levels in migrating interneurons, thereby adapting their chemokine responsiveness. In glioma cells, transduces signals via MEK/ERK pathway, mediating resistance to apoptosis. Promotes cell growth and survival. Not involved in cell migration, adhesion or proliferation of normal hematopoietic progenitors but activated by CXCL11 in malignant hemapoietic cells, leading to phosphorylation of ERK1/2 (MAPK3/MAPK1) and enhanced cell adhesion and migration. Plays a regulatory role in CXCR4-mediated activation of cell surface integrins by CXCL12. Required for heart valve development. Regulates axon guidance in the oculomotor system through the regulation of CXCL12 levels. The sequence is that of Atypical chemokine receptor 3 (ACKR3) from Canis lupus familiaris (Dog).